The primary structure comprises 233 residues: Large ribosomal subunit protein uL1 (233 aa).

Belongs to the universal ribosomal protein uL1 family. In terms of assembly, part of the 50S ribosomal subunit.

Functionally, binds directly to 23S rRNA. The L1 stalk is quite mobile in the ribosome, and is involved in E site tRNA release. Its function is as follows. Protein L1 is also a translational repressor protein, it controls the translation of the L11 operon by binding to its mRNA. This Buchnera aphidicola subsp. Baizongia pistaciae (strain Bp) protein is Large ribosomal subunit protein uL1.